A 267-amino-acid chain; its full sequence is Outer membrane protein assembly factor BamD (267 aa).

A signal peptide spans 1–16; sequence MKKILLTVSLGLALSA. The N-palmitoyl cysteine moiety is linked to residue Cys-17. Cys-17 carries the S-diacylglycerol cysteine lipid modification.

It belongs to the BamD family. Part of the Bam complex.

Its subcellular location is the cell outer membrane. Part of the outer membrane protein assembly complex, which is involved in assembly and insertion of beta-barrel proteins into the outer membrane. Required for efficient transformation of Neisseria meningitidis by species-related DNA. This chain is Outer membrane protein assembly factor BamD, found in Neisseria meningitidis serogroup B (strain ATCC BAA-335 / MC58).